The sequence spans 384 residues: 5-cytosine rRNA methyltransferase NSUN4 (384 aa).

Residues 1 to 25 constitute a mitochondrion transit peptide; it reads MAALVVRGVRDMLKRADFATVPRRQ. Positions 185, 186, 187, and 204 each coordinate S-adenosyl-L-methionine. A Phosphoserine modification is found at serine 206. Residues arginine 209, aspartate 237, glycine 238, and aspartate 255 each contribute to the S-adenosyl-L-methionine site. Cysteine 310 serves as the catalytic Nucleophile.

Belongs to the class I-like SAM-binding methyltransferase superfamily. RsmB/NOP family. In terms of assembly, heterodimer with MTERFD2/MTERF4; this interaction seems to be required for NSUN4 recruitment to the mitochondrial large ribosomal subunit.

The protein resides in the mitochondrion. It catalyses the reaction a cytidine in rRNA + S-adenosyl-L-methionine = a 5-methylcytidine in rRNA + S-adenosyl-L-homocysteine + H(+). The enzyme catalyses a cytidine in mRNA + S-adenosyl-L-methionine = a 5-methylcytidine in mRNA + S-adenosyl-L-homocysteine + H(+). Mitochondrial RNA cytosine C(5)-methyltransferase that methylates cytosine to 5-methylcytosine (m5C) in various RNAs, such as rRNAs, mRNAs and some long non-coding RNAs (lncRNAs). Involved in mitochondrial ribosome small subunit (SSU) maturation by catalyzing methylation of mitochondrial 12S rRNA; the function is independent of MTERFD2/MTERF4 and assembled mitochondrial ribosome large subunit (LSU). Targeted to LSU by MTERFD2/MTERF4 and probably is involved in a final step in ribosome biogenesis to ensure that SSU and LSU are assembled. In vitro can methylate 16S rRNA of the LSU; the methylation is enhanced by MTERFD/MTERF4. Also acts as a regulator of innate immunity by marking double-stranded mitochondrial RNAs(mt-dsRNAs) generated in response to stress: catalyzes m5C modification on mitochondrial RNAs, such as a mRNAs and lncRNAs, with a preference for the termini of light-strand lncRNAs, promoting their degradation and cytosolic release. Modified light-strand lncRNAs are then recognized by C1QBP reader and recruited to the mitochondrial degradosome complex, which promotes their degradation. This is 5-cytosine rRNA methyltransferase NSUN4 (NSUN4) from Bos taurus (Bovine).